An 82-amino-acid chain; its full sequence is U10-myrmicitoxin-Mri1c (82 aa).

The N-terminal stretch at 1–26 (MRLSYVSLTLAIIFVMAIVHAPETEA) is a signal peptide. The propeptide occupies 27–52 (KAYPEADAVGEASAVGEADAVGVADP). Isoleucine amide is present on isoleucine 81.

It belongs to the formicidae venom precursor-01 superfamily. As to expression, expressed by the venom gland.

The protein localises to the secreted. Induces paralysis 5 minutes after injection into blowflies (L.caesar). In most cases is not lethal 24 hours after injection, but paralysis is irreversible. May have antimicrobial properties, like most ant linear peptides. This chain is U10-myrmicitoxin-Mri1c, found in Manica rubida (European giant red ant).